A 289-amino-acid chain; its full sequence is RNA-binding protein CP29B, chloroplastic (289 aa).

The transit peptide at 1–62 (MAASASSLAL…NSPASRFARN (62 aa)) directs the protein to the chloroplast. Residues Ser-6 and Ser-12 each carry the phosphoserine modification. N-acetylvaline is present on Val-63. Residues 91–169 (LKLFVGNLPF…RPLRVNAGPP (79 aa)) enclose the RRM 1 domain. The interval 158–199 (DGRPLRVNAGPPPPKREDGFSRGPRSSFGSSGSGYGGGGGSG) is disordered. The linker (Gly-rich) stretch occupies residues 170-203 (PPKREDGFSRGPRSSFGSSGSGYGGGGGSGAGSG). Residues 178-187 (SRGPRSSFGS) are compositionally biased toward low complexity. The span at 188–199 (SGSGYGGGGGSG) shows a compositional bias: gly residues. The RRM 2 domain maps to 204-282 (NRVYVGNLSW…RQIRVSEAEA (79 aa)).

ADP-ribosylated by the Pseudomonas syringae type III effector HopU1. ADP-ribosylation reduces the ability of the protein to bind RNA. Post-translationally, phosphorylated on tyrosine residues after treatment with abscisic acid (ABA). Phosphorylation may reduce the ability of the protein to bind RNA.

It is found in the plastid. It localises to the chloroplast. Functionally, could be involved in splicing and/or processing of chloroplast RNA's. The chain is RNA-binding protein CP29B, chloroplastic from Arabidopsis thaliana (Mouse-ear cress).